The following is a 79-amino-acid chain: ATP synthase subunit c (79 aa).

Transmembrane regions (helical) follow at residues 11 to 31 (ISAAIIMGFASIGAAIGIGIL) and 55 to 75 (IVMGLVDAIPMISVGLGLYLI).

Belongs to the ATPase C chain family. F-type ATPases have 2 components, F(1) - the catalytic core - and F(0) - the membrane proton channel. F(1) has five subunits: alpha(3), beta(3), gamma(1), delta(1), epsilon(1). F(0) has three main subunits: a(1), b(2) and c(10-14). The alpha and beta chains form an alternating ring which encloses part of the gamma chain. F(1) is attached to F(0) by a central stalk formed by the gamma and epsilon chains, while a peripheral stalk is formed by the delta and b chains.

The protein localises to the cell membrane. F(1)F(0) ATP synthase produces ATP from ADP in the presence of a proton or sodium gradient. F-type ATPases consist of two structural domains, F(1) containing the extramembraneous catalytic core and F(0) containing the membrane proton channel, linked together by a central stalk and a peripheral stalk. During catalysis, ATP synthesis in the catalytic domain of F(1) is coupled via a rotary mechanism of the central stalk subunits to proton translocation. In terms of biological role, key component of the F(0) channel; it plays a direct role in translocation across the membrane. A homomeric c-ring of between 10-14 subunits forms the central stalk rotor element with the F(1) delta and epsilon subunits. This Wigglesworthia glossinidia brevipalpis protein is ATP synthase subunit c.